The primary structure comprises 618 residues: Manganese lipoxygenase (618 aa).

A signal peptide spans 1 to 16 (MRSRILAIVFAARHVA). The span at 36 to 45 (SSTTVLPSPT) shows a compositional bias: low complexity. The disordered stretch occupies residues 36–58 (SSTTVLPSPTQYTLPNNDPNQGA). Residues 46–58 (QYTLPNNDPNQGA) are compositionally biased toward polar residues. The 572-residue stretch at 47–618 (YTLPNNDPNQ…PAVNPFFLSV (572 aa)) folds into the Lipoxygenase domain. 5 N-linked (GlcNAc...) asparagine glycosylation sites follow: N60, N91, N106, N116, and N157. Positions 290, 294, 478, and 482 each coordinate Mn(2+). N513 is a glycosylation site (N-linked (GlcNAc...) asparagine). V618 is a Mn(2+) binding site.

The protein belongs to the lipoxygenase family. Manganese lipoxygenase subfamily. It depends on Mn(2+) as a cofactor. In terms of processing, N- and O-glycosylated.

It localises to the secreted. The catalysed reaction is (9Z,12Z)-octadecadienoate + O2 = (11S)-hydroperoxy-(9Z,12Z)-octadecadienoate. The enzyme catalyses (9Z,12Z)-octadecadienoate + O2 = (13R)-hydroperoxy-(9Z,11E)-octadecadienoate. It carries out the reaction (9Z,12Z,15Z)-octadecatrienoate + O2 = (11S)-hydroperoxy-(9Z,12Z,15Z)-octadecatrienoate. It catalyses the reaction (9Z,12Z,15Z)-octadecatrienoate + O2 = (13R)-hydroperoxy-(9Z,11E,15Z)-octadecatrienoate. Its function is as follows. Lipoxygenase that metabolizes linoleic and alpha-linolenic acids to 11S- and 13R-hydroperoxy fatty acids. At the end of lipoxygenation, the intermediate product 11S-HPODE from linoleic acid is then transformed into 13R-HPODE as the final product. It also acts on alpha-linolenic acid producing 11S-HPOTrE and 13R-HPOTrE with subsequent transformation of 11S-HPOTrE to 13R-HPOTrE as final product. The sequence is that of Manganese lipoxygenase from Gaeumannomyces avenae (Oat take-all root rot fungus).